A 394-amino-acid polypeptide reads, in one-letter code: Elongation factor Tu (394 aa).

The tr-type G domain maps to 10–204; that stretch reads KPHINIGTIG…AVDDNIPTPE (195 aa). Residues 19 to 26 are G1; the sequence is GHVDHGKT. 19 to 26 contributes to the GTP binding site; that stretch reads GHVDHGKT. Thr26 provides a ligand contact to Mg(2+). The G2 stretch occupies residues 60–64; sequence GITIN. The tract at residues 81–84 is G3; sequence DCPG. Residues 81 to 85 and 136 to 139 each bind GTP; these read DCPGH and NKID. Residues 136–139 form a G4 region; the sequence is NKID. The G5 stretch occupies residues 174-176; that stretch reads SAL.

The protein belongs to the TRAFAC class translation factor GTPase superfamily. Classic translation factor GTPase family. EF-Tu/EF-1A subfamily. Monomer.

It is found in the cytoplasm. The enzyme catalyses GTP + H2O = GDP + phosphate + H(+). Its function is as follows. GTP hydrolase that promotes the GTP-dependent binding of aminoacyl-tRNA to the A-site of ribosomes during protein biosynthesis. The protein is Elongation factor Tu of Chlamydia caviae (strain ATCC VR-813 / DSM 19441 / 03DC25 / GPIC) (Chlamydophila caviae).